The sequence spans 202 residues: Apolipoprotein R (202 aa).

The first 28 residues, 1-28, serve as a signal peptide directing secretion; it reads MPPNLQRIFPALCLLGVLFLLHCTPVLC. Sushi domains follow at residues 29–87 and 88–145; these read GCDN…QCKA and LCPK…KCEW. Intrachain disulfides connect C30/C73, C59/C85, C89/C130, and C116/C143.

As to quaternary structure, forms high molecular weight disulfide-linked complexes. As to expression, plasma. Found on very low-density lipoprotein (VLDL), on chylomicrons, and in the D &gt; 1.21 g/ml fraction of pig plasma. Found in liver, spleen, lung, bone marrow and lymph node.

Its subcellular location is the secreted. Its function is as follows. May be a lipoprotein-borne regulator of either the coagulation or the complement cascades. In Sus scrofa (Pig), this protein is Apolipoprotein R (APOR).